A 779-amino-acid chain; its full sequence is Neutral ceramidase 1 (779 aa).

The active-site Nucleophile is Ser350. Asn368, Asn432, and Asn667 each carry an N-linked (GlcNAc...) asparagine glycan.

It belongs to the neutral ceramidase family. Mostly expressed in stems, leaves, roots and siliques, and, to a lower extent, in flowers.

The protein resides in the secreted. It is found in the endoplasmic reticulum. Its subcellular location is the golgi apparatus. It catalyses the reaction an N-acylsphing-4-enine + H2O = sphing-4-enine + a fatty acid. Hydrolyzes the sphingolipid ceramide into sphingosine and free fatty acid. Regulates sphingolipid homeostasis. Promotes oxidative stress resistance. In Arabidopsis thaliana (Mouse-ear cress), this protein is Neutral ceramidase 1.